The sequence spans 670 residues: DNA ligase (670 aa).

NAD(+)-binding positions include 32 to 36, 81 to 82, and glutamate 114; these read DSEYD and SL. The active-site N6-AMP-lysine intermediate is the lysine 116. NAD(+)-binding residues include arginine 137, glutamate 174, lysine 291, and lysine 315. The Zn(2+) site is built by cysteine 409, cysteine 412, cysteine 427, and cysteine 433. The 79-residue stretch at 592 to 670 folds into the BRCT domain; it reads ASENLFKDKT…EEEFLAQITR (79 aa).

The protein belongs to the NAD-dependent DNA ligase family. LigA subfamily. Mg(2+) is required as a cofactor. Requires Mn(2+) as cofactor.

The enzyme catalyses NAD(+) + (deoxyribonucleotide)n-3'-hydroxyl + 5'-phospho-(deoxyribonucleotide)m = (deoxyribonucleotide)n+m + AMP + beta-nicotinamide D-nucleotide.. DNA ligase that catalyzes the formation of phosphodiester linkages between 5'-phosphoryl and 3'-hydroxyl groups in double-stranded DNA using NAD as a coenzyme and as the energy source for the reaction. It is essential for DNA replication and repair of damaged DNA. In Haemophilus influenzae (strain 86-028NP), this protein is DNA ligase.